Reading from the N-terminus, the 441-residue chain is Importin subunit alpha-8 (441 aa).

ARM repeat units lie at residues 39–79 (QRDI…NIAV), 80–118 (DNPGVVVNNNAVPVLIQLIASPKDYVREQAIWTLSNVAG), 121–158 (IHYRDFVLNSGVLMPLLRLLYKDTTLRIATWALRNLCR), 160–199 (KPHPAFDQVKPALPALEILLHSHDEDVLKNACMALCHLSE), 202–241 (EDGIQSVIEAGFVPKLVQILQLPSPVVLVPALLTIGAMTA), 244–284 (HQQT…NITA), 287–326 (KEQIQSVIDANLIPILVNLAQDTDFYMKKEAVWAISNMAL), and 330–370 (HDQI…NMLK).

It belongs to the importin alpha family. In terms of assembly, forms a complex with importin subunit beta-1.

It localises to the nucleus envelope. In terms of biological role, binds to conventional NLS motifs and mediates nuclear protein import across the nuclear envelope. The sequence is that of Importin subunit alpha-8 from Arabidopsis thaliana (Mouse-ear cress).